Consider the following 92-residue polypeptide: Small ribosomal subunit protein uS15c (92 aa).

The protein belongs to the universal ribosomal protein uS15 family. In terms of assembly, part of the 30S ribosomal subunit.

It is found in the plastid. It localises to the chloroplast. This Lemna minor (Common duckweed) protein is Small ribosomal subunit protein uS15c (rps15-A).